The chain runs to 283 residues: Urease accessory protein UreD (283 aa).

Positions 1-20 (MTQTQPVGTLRLTIDDQGPQ) are disordered.

It belongs to the UreD family. As to quaternary structure, ureD, UreF and UreG form a complex that acts as a GTP-hydrolysis-dependent molecular chaperone, activating the urease apoprotein by helping to assemble the nickel containing metallocenter of UreC. The UreE protein probably delivers the nickel.

Its subcellular location is the cytoplasm. Its function is as follows. Required for maturation of urease via the functional incorporation of the urease nickel metallocenter. The chain is Urease accessory protein UreD from Corynebacterium glutamicum (strain R).